Consider the following 248-residue polypeptide: Coproheme decarboxylase (248 aa).

Fe-coproporphyrin III is bound by residues Arg130, 144-148, His171, Gln184, and Ser222; that span reads YPMDK. The active site involves Tyr144.

Belongs to the ChdC family. Type 1 subfamily. Fe-coproporphyrin III is required as a cofactor.

It carries out the reaction Fe-coproporphyrin III + 2 H2O2 + 2 H(+) = heme b + 2 CO2 + 4 H2O. It catalyses the reaction Fe-coproporphyrin III + H2O2 + H(+) = harderoheme III + CO2 + 2 H2O. The catalysed reaction is harderoheme III + H2O2 + H(+) = heme b + CO2 + 2 H2O. Its pathway is porphyrin-containing compound metabolism; protoheme biosynthesis. Functionally, involved in coproporphyrin-dependent heme b biosynthesis. Catalyzes the decarboxylation of Fe-coproporphyrin III (coproheme) to heme b (protoheme IX), the last step of the pathway. The reaction occurs in a stepwise manner with a three-propionate intermediate. This Geobacillus thermodenitrificans (strain NG80-2) protein is Coproheme decarboxylase.